The primary structure comprises 333 residues: MLRSRVPANIRAFDAFPKFSKEYRRQSSSRGGFFTILLSVLIVVLVFSQCVQYIRGIREQELFIYDSVSELMDLNIDITIAMPCSNLRIDVVDRTKDLVLATEALTLEEAFIKDMPTSSTIYKNDRYAGLRWARTEKFRKKNNAEPGSGTACRIYGQLVVNRVNGQLHITAPGWGYGRSNIPFHSLNFTHYIEELSFGEYYPALVNALDGHYGHANDHPFAFQYYLSVLPTSYKSSFRSFETNQYSLTENSVVRQLGFGSLPPGIFIDYDLEPLAVRVVDKHPNVASTLLRILAISGGLITVASWIERVYSSRAHRSTSEADMLGLLGKSETE.

The Cytoplasmic portion of the chain corresponds to 1 to 30 (MLRSRVPANIRAFDAFPKFSKEYRRQSSSR). Residues 31-51 (GGFFTILLSVLIVVLVFSQCV) form a helical membrane-spanning segment. Residues 52 to 285 (QYIRGIREQE…VRVVDKHPNV (234 aa)) are Lumenal-facing. A glycan (N-linked (GlcNAc...) asparagine) is linked at N187. The chain crosses the membrane as a helical span at residues 286–306 (ASTLLRILAISGGLITVASWI). The Cytoplasmic segment spans residues 307–333 (ERVYSSRAHRSTSEADMLGLLGKSETE). Phosphoserine is present on residues S317 and S319.

The protein belongs to the ERGIC family.

It localises to the endoplasmic reticulum membrane. Its subcellular location is the golgi apparatus membrane. The protein localises to the endoplasmic reticulum-Golgi intermediate compartment membrane. Its function is as follows. Constituent of COPII-coated endoplasmic reticulum-derived transport vesicles. Required for efficient transport of a subset of secretory proteins to the Golgi. Facilitates retrograde transport from the Golgi to the endoplasmic reticulum. The polypeptide is ER-derived vesicles protein 41 (erv41) (Schizosaccharomyces pombe (strain 972 / ATCC 24843) (Fission yeast)).